Here is a 521-residue protein sequence, read N- to C-terminus: Riboflavin transporter MCH5 (521 aa).

2 disordered regions span residues 1–33 and 65–96; these read MSSD…SIHY and NKGT…NEEI. Topologically, residues 1–103 are cytoplasmic; that stretch reads MSSDSLTPKD…EEIESFPEGG (103 aa). The chain crosses the membrane as a helical span at residues 104–124; sequence FKAWVVTFGCFLGLIACFGLL. The N-linked (GlcNAc...) asparagine glycan is linked to asparagine 125. Topologically, residues 125 to 143 are extracellular; sequence NSTGVIESHLQDNQLSSES. A helical membrane pass occupies residues 144–164; sequence VSTIGWLFSLFLFVCSASCII. Topologically, residues 165 to 172 are cytoplasmic; that stretch reads SGTYFDRN. Residues 173–193 traverse the membrane as a helical segment; it reads GFRTIMIVGTVFHVAGLFATA. Residue asparagine 194 is glycosylated (N-linked (GlcNAc...) asparagine). Topologically, residues 194 to 200 are extracellular; that stretch reads NSTKYWH. The chain crosses the membrane as a helical span at residues 201–221; sequence FILSFAIVCGFGNGIVLSPLV. Over 222–233 the chain is Cytoplasmic; that stretch reads SVPAHYFFKRRG. A helical membrane pass occupies residues 234-254; it reads TALAMATIGGSVGGVVFPIML. The Extracellular portion of the chain corresponds to 255–269; sequence RSFFSMKSDTDPTYG. The helical transmembrane segment at 270–290 threads the bilayer; the sequence is FVWGIRTLGFLDLALLTLSII. Topologically, residues 291 to 325 are cytoplasmic; sequence LVKERLPHVIENSKDGESRWRYILRVYILQCFDAK. The helical transmembrane segment at 326–346 threads the bilayer; it reads AFLDMKYLFCVLGTVFSELSI. The Extracellular portion of the chain corresponds to 347–367; that stretch reads NSALTYYGSYATSHGISANDA. The chain crosses the membrane as a helical span at residues 368 to 388; sequence YTLIMIINVCGIPGRWVPGYL. Topologically, residues 389–396 are cytoplasmic; the sequence is SDKFGRFN. A helical membrane pass occupies residues 397–417; sequence VAIATLLTLFIVMFVGWLPFG. Over 418 to 422 the chain is Extracellular; sequence TNLTN. N-linked (GlcNAc...) asparagine glycosylation is present at asparagine 419. Residues 423 to 443 form a helical membrane-spanning segment; it reads MYVISALYGFCSGSVFSLLPV. At 444-461 the chain is on the cytoplasmic side; that stretch reads CCGQISKTEEFGKRYSTM. A helical transmembrane segment spans residues 462–482; it reads YFVVGFGTLVGIPITGAIISI. The Extracellular segment spans residues 483 to 487; the sequence is KTTAD. A helical transmembrane segment spans residues 488 to 508; the sequence is YQHYIIFCGLATFVSAVCYII. The Cytoplasmic segment spans residues 509–521; sequence SRAYCVGFKWVRF.

The protein belongs to the major facilitator superfamily. Monocarboxylate porter (TC 2.A.1.13) family.

It is found in the cell membrane. In terms of biological role, riboflavin transporter involved in riboflavin (vitamin B2) uptake. Does not act in the transport of monocarboxylic acids across the plasma membrane. The protein is Riboflavin transporter MCH5 (MCH5) of Saccharomyces cerevisiae (strain ATCC 204508 / S288c) (Baker's yeast).